The following is a 1081-amino-acid chain: Teashirt homolog 3 (1081 aa).

Disordered regions lie at residues 25-104 (LVED…EVQV), 141-161 (PSSE…SSCG), and 238-257 (HYRD…WSKP). Acidic residues predominate over residues 26–37 (VEDDVEPEEQAA). Basic and acidic residues predominate over residues 68-87 (SSHEMDSESHISETSDRMAD). 2 consecutive C2H2-type zinc fingers follow at residues 214-238 (FRCK…ETGH) and 275-299 (LKCM…KTKH). Residues 238-247 (HYRDDNHETD) show a composition bias toward basic and acidic residues. Residues 325–346 (SLELELPSSPDSTGGTPKATLS) are disordered. The C2H2-type 3; atypical zinc-finger motif lies at 387–410 (KCMECGSSHDTLQELTAHMMVTGH). The span at 474-491 (VDKEKAVPDEKPKEREKP) shows a compositional bias: basic and acidic residues. Disordered regions lie at residues 474-499 (VDKE…EKYD), 626-699 (EKMK…KPLS), 792-824 (LTKG…TVTT), and 855-897 (TESH…RQSN). Residues 606–630 (NFHAMEELVKKVTEKVAKVEEKMKE) are a coiled coil. Over residues 660 to 670 (SDGSFKSQENS) the composition is skewed to polar residues. Ser-682 carries the post-translational modification Phosphoserine. Composition is skewed to low complexity over residues 800-824 (GCSL…TVTT) and 856-869 (ESHT…SSIS). The segment at residues 891–961 (RKGRQSNWNP…NVKYQLRRTG (71 aa)) is a DNA-binding region (homeobox; atypical). 2 consecutive C2H2-type zinc fingers follow at residues 976-998 (FFCN…LESH) and 1041-1064 (YQCK…SKTH).

It belongs to the teashirt C2H2-type zinc-finger protein family. In terms of assembly, interacts (via N-terminus) with HDAC1 and HDAC2; the interaction is direct. Found in a trimeric complex with APBB1 and HDAC1; the interaction between HDAC1 and APBB1 is mediated by TSHZ3. Interacts (via homeobox domain) with APBB1 (via PID domain 1). In terms of tissue distribution, expressed in corticostriatal neurons.

The protein localises to the nucleus. The protein resides in the cell projection. It localises to the growth cone. In terms of biological role, transcriptional regulator involved in developmental processes. Functions in association with APBB1, SET and HDAC factors as a transcriptional repressor, that inhibits the expression of CASP4. TSHZ3-mediated transcription repression involves the recruitment of histone deacetylases HDAC1 and HDAC2. Associates with chromatin in a region surrounding the CASP4 transcriptional start site(s). Regulates the development of neurons involved in both respiratory rhythm and airflow control. Promotes maintenance of nucleus ambiguus (nA) motoneurons, which govern upper airway function, and establishes a respiratory rhythm generator (RRG) activity compatible with survival at birth. Involved in the differentiation of the proximal uretic smooth muscle cells during developmental processes. Involved in the up-regulation of myocardin, that directs the expression of smooth muscle cells in the proximal ureter. Involved in the modulation of glutamatergic synaptic transmission and long-term synaptic potentiation. The sequence is that of Teashirt homolog 3 (Tshz3) from Mus musculus (Mouse).